A 401-amino-acid polypeptide reads, in one-letter code: MHCDVLWHNAQLMTLDAADGGLGIVDDGIVACRHGHIVYAGAAAQAPALQPDSAHDCRRRWISPGLIDCHTHLVYAGNRANEFEQRLRGASYADIAAAGGGIVATVRATRAADDAALLAASLPRLDAMLGEGVTTLEIKSGYGLTLDDEVKQLRVARQLAALRKVEVVPTFLGAHAVPPGGQAQHYIDQVCTQMIPAIATQGLAEAVDVFCEHLAFSQAQAEKVFVAAQAHGLRIKIHAEQLSNQHGAELAARYGALSADHIEYLDQTGIAAMAAAGTVAVLLPGAFYFTRDTQLPPIAALRTAGVPLALATDCNPGTSPLTSPLLAMNMAATLFRMTVDECIAGFTREAARALGRSERLGQLRAGMDCDLAIWNIDAPADLVYRMGFNPLHARVWRGHLC.

The Fe(3+) site is built by His70 and His72. Residues His70 and His72 each contribute to the Zn(2+) site. 4-imidazolone-5-propanoate contacts are provided by Arg79, Tyr142, and His175. Tyr142 contacts N-formimidoyl-L-glutamate. His238 contributes to the Fe(3+) binding site. His238 is a binding site for Zn(2+). A 4-imidazolone-5-propanoate-binding site is contributed by Gln241. Asp313 provides a ligand contact to Fe(3+). Asp313 provides a ligand contact to Zn(2+). N-formimidoyl-L-glutamate contacts are provided by Asn315 and Gly317. Thr318 lines the 4-imidazolone-5-propanoate pocket.

The protein belongs to the metallo-dependent hydrolases superfamily. HutI family. Requires Zn(2+) as cofactor. Fe(3+) is required as a cofactor.

It localises to the cytoplasm. The catalysed reaction is 4-imidazolone-5-propanoate + H2O = N-formimidoyl-L-glutamate. The protein operates within amino-acid degradation; L-histidine degradation into L-glutamate; N-formimidoyl-L-glutamate from L-histidine: step 3/3. Functionally, catalyzes the hydrolytic cleavage of the carbon-nitrogen bond in imidazolone-5-propanoate to yield N-formimidoyl-L-glutamate. It is the third step in the universal histidine degradation pathway. The chain is Imidazolonepropionase from Xanthomonas euvesicatoria pv. vesicatoria (strain 85-10) (Xanthomonas campestris pv. vesicatoria).